The sequence spans 385 residues: Protein pelota homolog (385 aa).

Residue Lys-162 forms a Glycyl lysine isopeptide (Lys-Gly) (interchain with G-Cter in SUMO2) linkage. Ser-374, Ser-380, Ser-381, and Ser-382 each carry phosphoserine.

This sequence belongs to the eukaryotic release factor 1 family. Pelota subfamily. As to quaternary structure, component of the Pelota-HBS1L complex, also named Dom34-Hbs1 complex, composed of PELO and HBS1L. Interacts with PINK1. Interacts with ABCE1. Interacts with CNOT4. A divalent metal cation is required as a cofactor.

It is found in the cytoplasm. Component of the Pelota-HBS1L complex, a complex that recognizes stalled ribosomes and triggers the No-Go Decay (NGD) pathway. In the Pelota-HBS1L complex, PELO recognizes ribosomes stalled at the 3' end of an mRNA and engages stalled ribosomes by destabilizing mRNA in the mRNA channel. Following mRNA extraction from stalled ribosomes by the SKI complex, the Pelota-HBS1L complex promotes recruitment of ABCE1, which drives the disassembly of stalled ribosomes, followed by degradation of damaged mRNAs as part of the NGD pathway. As part of the PINK1-regulated signaling, upon mitochondrial damage is recruited to the ribosome/mRNA-ribonucleoprotein complex associated to mitochondrial outer membrane thereby enabling the recruitment of autophagy receptors and induction of mitophagy. This chain is Protein pelota homolog (PELO), found in Bos taurus (Bovine).